Consider the following 195-residue polypeptide: Glycerol-3-phosphate acyltransferase (195 aa).

Transmembrane regions (helical) follow at residues 4-24 (GLIL…GLLL), 53-73 (GLAA…VLIA), 80-100 (TAVW…WLGF), 110-130 (LGVL…IWLA), 133-153 (FLFR…PIAL), and 154-174 (YFLS…IVFI).

The protein belongs to the PlsY family. As to quaternary structure, probably interacts with PlsX.

The protein resides in the cell inner membrane. It catalyses the reaction an acyl phosphate + sn-glycerol 3-phosphate = a 1-acyl-sn-glycero-3-phosphate + phosphate. The protein operates within lipid metabolism; phospholipid metabolism. Functionally, catalyzes the transfer of an acyl group from acyl-phosphate (acyl-PO(4)) to glycerol-3-phosphate (G3P) to form lysophosphatidic acid (LPA). This enzyme utilizes acyl-phosphate as fatty acyl donor, but not acyl-CoA or acyl-ACP. In Mesorhizobium japonicum (strain LMG 29417 / CECT 9101 / MAFF 303099) (Mesorhizobium loti (strain MAFF 303099)), this protein is Glycerol-3-phosphate acyltransferase.